We begin with the raw amino-acid sequence, 451 residues long: CBL-interacting protein kinase 10 (451 aa).

The 255-residue stretch at 13–267 (YEIGKLLGQG…VSEIMEDPWF (255 aa)) folds into the Protein kinase domain. Residues 19–27 (LGQGSFAKV) and Lys42 contribute to the ATP site. Asp135 serves as the catalytic Proton acceptor. Residues 153–182 (DFGLSALAECKRQDGLLHTTCGTPAYVAPE) are activation loop. Positions 304–336 (INEGKQEAENLTSLNAFDIISLSSGFDLSAMFE) constitute an NAF domain. The segment at 341–370 (KEESKFTSTNTATTITKKLEDVAKNLRLKF) is PPI.

It belongs to the protein kinase superfamily. CAMK Ser/Thr protein kinase family. SNF1 subfamily. Mn(2+) is required as a cofactor.

The catalysed reaction is L-seryl-[protein] + ATP = O-phospho-L-seryl-[protein] + ADP + H(+). It catalyses the reaction L-threonyl-[protein] + ATP = O-phospho-L-threonyl-[protein] + ADP + H(+). In terms of biological role, CIPK serine-threonine protein kinases interact with CBL proteins. Binding of a CBL protein to the regulatory NAF domain of CIPK protein lead to the activation of the kinase in a calcium-dependent manner. In Oryza sativa subsp. japonica (Rice), this protein is CBL-interacting protein kinase 10 (CIPK10).